The chain runs to 316 residues: MANLKEIRDRIVSVKNTRKITEAMRLVAAAKVRRAQDQVLKSRPFADKLARVLENIQSRVQFEAVDSPLLSKREVKSISLVCITADRGLCGGYNTNIIKKVEIRYAELVKQGYQPNLILVGKKAIGYFQNRKDRYAIKSTFKELEQVPTVKDSEGVTNEILAEFLSENSDRVEIIYTKFITLVSCAPVVQTLLPLDPQGIAEENDEIFRLTTKDSKLLVEKSNIEKSDSEKLPSDIVFEQSPDQLLDSLLPLYLQNQVLRALQESAASELACRMTAMNNASDNAKELASTLNLTYNKARQAAITQEILEVVGGSAV.

This sequence belongs to the ATPase gamma chain family. As to quaternary structure, F-type ATPases have 2 components, CF(1) - the catalytic core - and CF(0) - the membrane proton channel. CF(1) has five subunits: alpha(3), beta(3), gamma(1), delta(1), epsilon(1). CF(0) has three main subunits: a, b and c.

It is found in the cellular thylakoid membrane. Functionally, produces ATP from ADP in the presence of a proton gradient across the membrane. The gamma chain is believed to be important in regulating ATPase activity and the flow of protons through the CF(0) complex. This Prochlorococcus marinus (strain AS9601) protein is ATP synthase gamma chain.